Here is a 124-residue protein sequence, read N- to C-terminus: Small ribosomal subunit protein uS11 (124 aa).

The tract at residues 102-124 (RIGRIEDATPIPHDGTTPKRKNR) is disordered.

Belongs to the universal ribosomal protein uS11 family. As to quaternary structure, part of the 30S ribosomal subunit.

Located on the platform of the 30S subunit. The polypeptide is Small ribosomal subunit protein uS11 (Methanococcus maripaludis (strain C5 / ATCC BAA-1333)).